A 361-amino-acid polypeptide reads, in one-letter code: MSEELTLQLIDLHAGGDVSRIVTGGIDPLPGNTVREKMEYLREDADGLRQLLLSEPYGIPEMSVDLLVPASDPEAEVGYIIMEVMGYPIYSGSNTICTATAVLESGLVPKREGHQRFILESAAGLVHIEARVENGVVEAITCEGLPSYIDTYRASIHVPSVGDVTYSVAYSGGFYAMVDAAELGFSLNRDEEARLAECAHAIVEAIQAERGFSHYTLGDVGPLPFLHFMGPVEQVADGFFRSRSTTYVHPGVICRSTTGTGTSARLALMHHEGTLQPGDKLETVSLRGTGFIGEFTGSRQEGDHRVAENTITGKAHMLARSDIVINCNDPLVECGSLHHILTSGHRRTEALPVEEEVSLSD.

The active-site Proton acceptor is the Ser91. Substrate-binding positions include 92–93 and 259–260; these read GS and GT.

The protein belongs to the proline racemase family.

It catalyses the reaction trans-4-hydroxy-L-proline = cis-4-hydroxy-D-proline. In vitro, catalyzes the epimerization of trans-4-hydroxy-L-proline (t4LHyp) to cis-4-hydroxy-D-proline (c4DHyp), albeit with very low efficiency. The physiological substrate may be different. Displays neither proline racemase activity nor t3LHyp dehydratase activity. The sequence is that of Protein Csal_2339 from Chromohalobacter salexigens (strain ATCC BAA-138 / DSM 3043 / CIP 106854 / NCIMB 13768 / 1H11).